The following is a 150-amino-acid chain: Transthyretin (150 aa).

The N-terminal stretch at 1-20 (MASYRLLLLCLAGLVFVSEA) is a signal peptide. Position 30 is a sulfocysteine (Cys-30). Residue Lys-35 participates in L-thyroxine binding. Glu-62 bears the 4-carboxyglutamate mark. Glu-74 is a binding site for L-thyroxine. Asn-118 is a glycosylation site (N-linked (GlcNAc...) asparagine). Position 137 (Ser-137) interacts with L-thyroxine.

It belongs to the transthyretin family. As to quaternary structure, homotetramer. Dimer of dimers. In the homotetramer, subunits assemble around a central channel that can accommodate two ligand molecules. Interacts with RBP4. Sulfonation of the reactive cysteine Cys-30 enhances the stability of the native conformation of TTR, avoiding misassembly of the protein leading to amyloid formation. In terms of tissue distribution, detected in plasma and cerebrospinal fluid (at protein level). Highly expressed in the choroid plexus. Detected in liver.

Its subcellular location is the secreted. Thyroid hormone-binding protein. Probably transports thyroxine from the bloodstream to the brain. The protein is Transthyretin (TTR) of Sus scrofa (Pig).